A 61-amino-acid polypeptide reads, in one-letter code: Small ribosomal subunit protein uS14 (61 aa).

Positions 24, 27, 40, and 43 each coordinate Zn(2+).

It belongs to the universal ribosomal protein uS14 family. Zinc-binding uS14 subfamily. In terms of assembly, part of the 30S ribosomal subunit. Contacts proteins S3 and S10. The cofactor is Zn(2+).

Functionally, binds 16S rRNA, required for the assembly of 30S particles and may also be responsible for determining the conformation of the 16S rRNA at the A site. The chain is Small ribosomal subunit protein uS14 from Elusimicrobium minutum (strain Pei191).